A 351-amino-acid chain; its full sequence is Serine protease inhibitor dipetalogastin (351 aa).

The propeptide occupies 1 to 131 (LIKELVNMVI…AETTNAMEVL (131 aa)). Kazal-like domains lie at 19–69 (KELK…PCDE), 72–122 (HDFE…ECHA), 131–181 (LFQG…PCDE), 184–234 (HDFE…ECHP), 240–289 (QLIL…ECKV), and 297–347 (GEVR…RCLP). 18 disulfide bridges follow: Cys-25-Cys-50, Cys-27-Cys-46, Cys-35-Cys-67, Cys-78-Cys-103, Cys-80-Cys-99, Cys-88-Cys-120, Cys-137-Cys-162, Cys-139-Cys-158, Cys-147-Cys-179, Cys-190-Cys-215, Cys-192-Cys-211, Cys-200-Cys-232, Cys-246-Cys-271, Cys-248-Cys-267, Cys-256-Cys-287, Cys-303-Cys-328, Cys-305-Cys-324, and Cys-313-Cys-345.

It is found in the secreted. Its function is as follows. Thrombin inhibitor. Prevents blood clotting to allow insect to feed on blood. Also functions as an inhibitor of trypsin and plasmin. The sequence is that of Serine protease inhibitor dipetalogastin from Dipetalogaster maximus (Blood-sucking bug).